A 649-amino-acid polypeptide reads, in one-letter code: Arylsulfatase (649 aa).

An N-terminal signal peptide occupies residues 1 to 22 (MLQRLVVALCLLGFAALTAAAA). Ca(2+)-binding residues include aspartate 34 and aspartate 35. N-linked (GlcNAc...) asparagine glycosylation occurs at asparagine 41. A Ca(2+)-binding site is contributed by cysteine 72. Catalysis depends on cysteine 72, which acts as the Nucleophile. Cysteine 72 carries the post-translational modification 3-oxoalanine (Cys). N-linked (GlcNAc...) asparagine glycosylation is found at asparagine 89, asparagine 224, and asparagine 279. The Ca(2+) site is built by aspartate 324 and asparagine 325. 3 N-linked (GlcNAc...) asparagine glycosylation sites follow: asparagine 445, asparagine 489, and asparagine 531.

The protein belongs to the sulfatase family. Requires Ca(2+) as cofactor. In terms of processing, the conversion to 3-oxoalanine (also known as C-formylglycine, FGly), of a serine or cysteine residue in prokaryotes and of a cysteine residue in eukaryotes, is critical for catalytic activity.

Its subcellular location is the periplasm. It carries out the reaction an aryl sulfate + H2O = a phenol + sulfate + H(+). Inhibited by Na(3)BO(3) and KCN. No inhibition by sodium dodecyl sulfate, even at high concentration. Is commonly produced by soil microorganisms and plays an important role in the mineralization of sulfates. The polypeptide is Arylsulfatase (Volvox carteri (Green alga)).